The primary structure comprises 249 residues: Probable transcriptional regulatory protein Dtur_1615 (249 aa).

The protein belongs to the TACO1 family.

The protein resides in the cytoplasm. The polypeptide is Probable transcriptional regulatory protein Dtur_1615 (Dictyoglomus turgidum (strain DSM 6724 / Z-1310)).